Here is a 188-residue protein sequence, read N- to C-terminus: MKTIGVLAFQGGVIEHVKKIEELGAKPQLVKKKEDLKDLDGLILPGGESTTIGKFLIETGLKDQILNLIYEGMPVWGTCAGAILLSKNIKNQGSGVLPVLNIVIERNAYGSQLDSFKKEVFVPRFNIATECIFIRAPRIVEVAEGVEVLAELETPIAVLQKNILATTFHPELTSQNYWHSFFVENMVK.

47-49 contacts L-glutamine; the sequence is GES. Residue Cys-79 is the Nucleophile of the active site. Residues Arg-106 and 134–135 each bind L-glutamine; that span reads IR. Catalysis depends on charge relay system residues His-169 and Glu-171.

The protein belongs to the glutaminase PdxT/SNO family. In the presence of PdxS, forms a dodecamer of heterodimers. Only shows activity in the heterodimer.

It catalyses the reaction aldehydo-D-ribose 5-phosphate + D-glyceraldehyde 3-phosphate + L-glutamine = pyridoxal 5'-phosphate + L-glutamate + phosphate + 3 H2O + H(+). The enzyme catalyses L-glutamine + H2O = L-glutamate + NH4(+). Its pathway is cofactor biosynthesis; pyridoxal 5'-phosphate biosynthesis. Catalyzes the hydrolysis of glutamine to glutamate and ammonia as part of the biosynthesis of pyridoxal 5'-phosphate. The resulting ammonia molecule is channeled to the active site of PdxS. In Caldicellulosiruptor bescii (strain ATCC BAA-1888 / DSM 6725 / KCTC 15123 / Z-1320) (Anaerocellum thermophilum), this protein is Pyridoxal 5'-phosphate synthase subunit PdxT.